Consider the following 307-residue polypeptide: Protein phosphatase PTC7 homolog fig (307 aa).

Residues 41-300 (VQGSSKDQQL…DDITVILASV (260 aa)) form the PPM-type phosphatase domain. Positions 77, 78, and 222 each coordinate Mn(2+).

The protein belongs to the PP2C family. The cofactor is Mg(2+). Mn(2+) serves as cofactor.

It carries out the reaction O-phospho-L-seryl-[protein] + H2O = L-seryl-[protein] + phosphate. The enzyme catalyses O-phospho-L-threonyl-[protein] + H2O = L-threonyl-[protein] + phosphate. The protein is Protein phosphatase PTC7 homolog fig of Drosophila grimshawi (Hawaiian fruit fly).